We begin with the raw amino-acid sequence, 532 residues long: [Pyruvate dehydrogenase [acetyl-transferring]]-phosphatase 2, mitochondrial (532 aa).

Residues Met-1–Thr-69 constitute a mitochondrion transit peptide. Residues Asn-107–Val-518 enclose the PPM-type phosphatase domain. Positions 144, 145, 415, and 511 each coordinate Mn(2+).

It belongs to the PP2C family. It depends on Mg(2+) as a cofactor.

Its subcellular location is the mitochondrion. The enzyme catalyses O-phospho-L-seryl-[pyruvate dehydrogenase E1 alpha subunit] + H2O = L-seryl-[pyruvate dehydrogenase E1 alpha subunit] + phosphate. In terms of biological role, mitochondrial enzyme that catalyzes the dephosphorylation and concomitant reactivation of the alpha subunit of the E1 component of the pyruvate dehydrogenase complex (PDC), thereby stimulating the conversion of pyruvate into acetyl-CoA. Acts as a crucial regulator of T cell metabolism and function, with a particular focus on T-helper Th17. The protein is [Pyruvate dehydrogenase [acetyl-transferring]]-phosphatase 2, mitochondrial (Pdp2) of Mus musculus (Mouse).